Consider the following 116-residue polypeptide: MNHYSFSSLIRALIPLSLVIVSAVWQPAALADTRHIIVDSGDSALSKEAARQSKEQWDSTRSLRNKVNNRVEKEFDKTEKSIDGREKCNASYNVNAYWENTTDRCLDRRTGRPVAP.

Positions 1–31 are cleaved as a signal peptide; the sequence is MNHYSFSSLIRALIPLSLVIVSAVWQPAALA.

The protein belongs to the UPF0482 family.

This chain is UPF0482 protein ECA2253, found in Pectobacterium atrosepticum (strain SCRI 1043 / ATCC BAA-672) (Erwinia carotovora subsp. atroseptica).